Reading from the N-terminus, the 324-residue chain is Glyoxylate/hydroxypyruvate reductase B (324 aa).

Catalysis depends on residues R237 and E266. H285 serves as the catalytic Proton donor.

This sequence belongs to the D-isomer specific 2-hydroxyacid dehydrogenase family. GhrB subfamily. Homodimer.

It localises to the cytoplasm. The catalysed reaction is glycolate + NADP(+) = glyoxylate + NADPH + H(+). It carries out the reaction (R)-glycerate + NAD(+) = 3-hydroxypyruvate + NADH + H(+). The enzyme catalyses (R)-glycerate + NADP(+) = 3-hydroxypyruvate + NADPH + H(+). Functionally, catalyzes the NADPH-dependent reduction of glyoxylate and hydroxypyruvate into glycolate and glycerate, respectively. The polypeptide is Glyoxylate/hydroxypyruvate reductase B (Salmonella gallinarum (strain 287/91 / NCTC 13346)).